The sequence spans 242 residues: Ribonuclease PH (242 aa).

Phosphate is bound by residues R87 and 125–127; that span reads GTR.

Belongs to the RNase PH family. In terms of assembly, homohexameric ring arranged as a trimer of dimers.

The catalysed reaction is tRNA(n+1) + phosphate = tRNA(n) + a ribonucleoside 5'-diphosphate. Its function is as follows. Phosphorolytic 3'-5' exoribonuclease that plays an important role in tRNA 3'-end maturation. Removes nucleotide residues following the 3'-CCA terminus of tRNAs; can also add nucleotides to the ends of RNA molecules by using nucleoside diphosphates as substrates, but this may not be physiologically important. Probably plays a role in initiation of 16S rRNA degradation (leading to ribosome degradation) during starvation. The polypeptide is Ribonuclease PH (Thermosynechococcus vestitus (strain NIES-2133 / IAM M-273 / BP-1)).